The chain runs to 380 residues: MGIHGLAKLIADQAPGAIKEQEMKNFFGRKIAIDASMCIYQFLIAVRQDGNVLQNEDGETTSHLMGMFYRTIRMLENGIKPVYVFDGKPPQLKSGELEKRGERRAEAEKLLAQAQEAGEQENIDKFSKRLVKVTRQHNDECKKLLTLMGVPYVEAPCEAEASCAALVKAGKVFATATEDMDGLTFGTGVLLRHLTASEAKKLPIQEFHFSRILQDIGLSHEQFIDLCILLGCDYCGTIKGIGPKRAMDLIRQHGSIEEILDNIDLSKHPVPEDWLYKEARGLFLTPDVVDCSCLELKWSEPDEEGLVQFMCAEKQFSEDRMRNGCKKILKSRQGSTQGRLDSFFSVTGSLSSKRKEPEMKGSTKKKLKTGATAGKFKKGK.

The tract at residues 1–104 is N-domain; it reads MGIHGLAKLI…GELEKRGERR (104 aa). Asp34 is a Mg(2+) binding site. 2 residues coordinate DNA: Arg47 and Arg70. Mg(2+) is bound by residues Asp86, Glu158, Glu160, Asp179, and Asp181. The segment at 122–253 is I-domain; it reads NIDKFSKRLV…KRAMDLIRQH (132 aa). Glu158 is a DNA binding site. Residues Gly231 and Asp233 each contribute to the DNA site. Residue Asp233 coordinates Mg(2+). An interaction with PCNA region spans residues 336–344; that stretch reads TQGRLDSFF. Residues 348–380 are disordered; that stretch reads GSLSSKRKEPEMKGSTKKKLKTGATAGKFKKGK.

Belongs to the XPG/RAD2 endonuclease family. FEN1 subfamily. As to quaternary structure, interacts with PCNA. Three molecules of fen1 bind to one PCNA trimer with each molecule binding to one PCNA monomer. PCNA stimulates the nuclease activity without altering cleavage specificity. The cofactor is Mg(2+). Phosphorylated. Phosphorylation upon DNA damage induces relocalization to the nuclear plasma.

The protein resides in the nucleus. It is found in the nucleolus. It localises to the nucleoplasm. The protein localises to the mitochondrion. Structure-specific nuclease with 5'-flap endonuclease and 5'-3' exonuclease activities involved in DNA replication and repair. During DNA replication, cleaves the 5'-overhanging flap structure that is generated by displacement synthesis when DNA polymerase encounters the 5'-end of a downstream Okazaki fragment. It enters the flap from the 5'-end and then tracks to cleave the flap base, leaving a nick for ligation. Also involved in the long patch base excision repair (LP-BER) pathway, by cleaving within the apurinic/apyrimidinic (AP) site-terminated flap. Acts as a genome stabilization factor that prevents flaps from equilibrating into structures that lead to duplications and deletions. Also possesses 5'-3' exonuclease activity on nicked or gapped double-stranded DNA, and exhibits RNase H activity. Also involved in replication and repair of rDNA and in repairing mitochondrial DNA. This Osmerus mordax (Rainbow smelt) protein is Flap endonuclease 1 (fen1).